A 246-amino-acid polypeptide reads, in one-letter code: Ribonuclease PH (246 aa).

Residues R91 and 129–131 (GTR) contribute to the phosphate site.

It belongs to the RNase PH family. As to quaternary structure, homohexameric ring arranged as a trimer of dimers.

The catalysed reaction is tRNA(n+1) + phosphate = tRNA(n) + a ribonucleoside 5'-diphosphate. Phosphorolytic 3'-5' exoribonuclease that plays an important role in tRNA 3'-end maturation. Removes nucleotide residues following the 3'-CCA terminus of tRNAs; can also add nucleotides to the ends of RNA molecules by using nucleoside diphosphates as substrates, but this may not be physiologically important. Probably plays a role in initiation of 16S rRNA degradation (leading to ribosome degradation) during starvation. The sequence is that of Ribonuclease PH from Paraburkholderia phytofirmans (strain DSM 17436 / LMG 22146 / PsJN) (Burkholderia phytofirmans).